The following is a 414-amino-acid chain: Enolase (414 aa).

Glutamine 162 is a binding site for (2R)-2-phosphoglycerate. Glutamate 204 serves as the catalytic Proton donor. Mg(2+) contacts are provided by aspartate 239, glutamate 280, and aspartate 307. (2R)-2-phosphoglycerate contacts are provided by lysine 332, arginine 361, serine 362, and lysine 383. Lysine 332 functions as the Proton acceptor in the catalytic mechanism.

Belongs to the enolase family. Mg(2+) serves as cofactor.

It localises to the cytoplasm. The protein resides in the secreted. Its subcellular location is the cell surface. It catalyses the reaction (2R)-2-phosphoglycerate = phosphoenolpyruvate + H2O. Its pathway is carbohydrate degradation; glycolysis; pyruvate from D-glyceraldehyde 3-phosphate: step 4/5. Its function is as follows. Catalyzes the reversible conversion of 2-phosphoglycerate (2-PG) into phosphoenolpyruvate (PEP). It is essential for the degradation of carbohydrates via glycolysis. The polypeptide is Enolase (Campylobacter jejuni subsp. jejuni serotype O:2 (strain ATCC 700819 / NCTC 11168)).